Reading from the N-terminus, the 216-residue chain is Protein GrpE (216 aa).

Disordered regions lie at residues 1–45 (MTEE…LDPT) and 185–216 (RVAVAEPQPGATPAAAKEEKTDDEESGGTEEV). The segment covering 205-216 (TDDEESGGTEEV) has biased composition (acidic residues).

This sequence belongs to the GrpE family. Homodimer.

The protein localises to the cytoplasm. In terms of biological role, participates actively in the response to hyperosmotic and heat shock by preventing the aggregation of stress-denatured proteins, in association with DnaK and GrpE. It is the nucleotide exchange factor for DnaK and may function as a thermosensor. Unfolded proteins bind initially to DnaJ; upon interaction with the DnaJ-bound protein, DnaK hydrolyzes its bound ATP, resulting in the formation of a stable complex. GrpE releases ADP from DnaK; ATP binding to DnaK triggers the release of the substrate protein, thus completing the reaction cycle. Several rounds of ATP-dependent interactions between DnaJ, DnaK and GrpE are required for fully efficient folding. This chain is Protein GrpE, found in Streptomyces griseus subsp. griseus (strain JCM 4626 / CBS 651.72 / NBRC 13350 / KCC S-0626 / ISP 5235).